We begin with the raw amino-acid sequence, 237 residues long: 2,3,4,5-tetrahydropyridine-2,6-dicarboxylate N-acetyltransferase (237 aa).

It belongs to the transferase hexapeptide repeat family. DapH subfamily.

It carries out the reaction (S)-2,3,4,5-tetrahydrodipicolinate + acetyl-CoA + H2O = L-2-acetamido-6-oxoheptanedioate + CoA. It participates in amino-acid biosynthesis; L-lysine biosynthesis via DAP pathway; LL-2,6-diaminopimelate from (S)-tetrahydrodipicolinate (acetylase route): step 1/3. Catalyzes the transfer of an acetyl group from acetyl-CoA to tetrahydrodipicolinate. The chain is 2,3,4,5-tetrahydropyridine-2,6-dicarboxylate N-acetyltransferase from Alkaliphilus metalliredigens (strain QYMF).